Consider the following 294-residue polypeptide: MLISLPKVCGIYRYNVSMSKMTWLNVGGQADVLFKPRDIEDLMCLIKDAELPISVIGATSNIIIRDSGIRGITVKLGKEFAYIKCKDNSSIVAGGAALLSNLAYFAGEQQISGLEFLAGIPGTVGGGIEMNAGAYGSDIASVVKFIRAVNLEDGNLYEFSSEEMGYFYRGHSLKGRWIFIEAEFKGVSSEYELILQRLKEVIDKKNKSQPVRGKTAGCIFKNPIGCKAWKLIDESGCRGLDNGVAKISKKHCNFLLNYNNATALDLENLGNRVKDAVKDKFNIELEWEIRVLGR.

Residues 26–189 form the FAD-binding PCMH-type domain; that stretch reads VGGQADVLFK…IEAEFKGVSS (164 aa). R169 is an active-site residue. The active-site Proton donor is C218. The active site involves E288.

Belongs to the MurB family. It depends on FAD as a cofactor.

It is found in the cytoplasm. It carries out the reaction UDP-N-acetyl-alpha-D-muramate + NADP(+) = UDP-N-acetyl-3-O-(1-carboxyvinyl)-alpha-D-glucosamine + NADPH + H(+). The protein operates within cell wall biogenesis; peptidoglycan biosynthesis. Cell wall formation. This is UDP-N-acetylenolpyruvoylglucosamine reductase from Wolbachia pipientis subsp. Culex pipiens (strain wPip).